Reading from the N-terminus, the 280-residue chain is Energy-coupling factor transporter ATP-binding protein EcfA2 (280 aa).

Residues 3–245 (INLQNVSYTY…VSLLEKKQLG (243 aa)) enclose the ABC transporter domain. An ATP-binding site is contributed by 40–47 (GHTGSGKS).

Belongs to the ABC transporter superfamily. Energy-coupling factor EcfA family. As to quaternary structure, forms a stable energy-coupling factor (ECF) transporter complex composed of 2 membrane-embedded substrate-binding proteins (S component), 2 ATP-binding proteins (A component) and 2 transmembrane proteins (T component).

Its subcellular location is the cell membrane. In terms of biological role, ATP-binding (A) component of a common energy-coupling factor (ECF) ABC-transporter complex. Unlike classic ABC transporters this ECF transporter provides the energy necessary to transport a number of different substrates. The chain is Energy-coupling factor transporter ATP-binding protein EcfA2 from Streptococcus pyogenes serotype M3 (strain ATCC BAA-595 / MGAS315).